Here is a 255-residue protein sequence, read N- to C-terminus: tRNA (guanine-N(1)-)-methyltransferase (255 aa).

S-adenosyl-L-methionine contacts are provided by residues glycine 113 and 133-138 (IGDYVL).

This sequence belongs to the RNA methyltransferase TrmD family. Homodimer.

It localises to the cytoplasm. The catalysed reaction is guanosine(37) in tRNA + S-adenosyl-L-methionine = N(1)-methylguanosine(37) in tRNA + S-adenosyl-L-homocysteine + H(+). Functionally, specifically methylates guanosine-37 in various tRNAs. This chain is tRNA (guanine-N(1)-)-methyltransferase, found in Shigella flexneri serotype 5b (strain 8401).